A 678-amino-acid polypeptide reads, in one-letter code: DNA ligase (678 aa).

Residues 47 to 51 (DSDYD), 96 to 97 (SL), and Glu122 contribute to the NAD(+) site. The active-site N6-AMP-lysine intermediate is the Lys124. Arg145, Glu182, Lys300, and Lys324 together coordinate NAD(+). Residues Cys418, Cys421, Cys436, and Cys442 each contribute to the Zn(2+) site. The BRCT domain occupies 602-678 (AYNESFTGKT…ILEDNLKDLL (77 aa)).

The protein belongs to the NAD-dependent DNA ligase family. LigA subfamily. The cofactor is Mg(2+). Requires Mn(2+) as cofactor.

It catalyses the reaction NAD(+) + (deoxyribonucleotide)n-3'-hydroxyl + 5'-phospho-(deoxyribonucleotide)m = (deoxyribonucleotide)n+m + AMP + beta-nicotinamide D-nucleotide.. DNA ligase that catalyzes the formation of phosphodiester linkages between 5'-phosphoryl and 3'-hydroxyl groups in double-stranded DNA using NAD as a coenzyme and as the energy source for the reaction. It is essential for DNA replication and repair of damaged DNA. In Francisella tularensis subsp. tularensis (strain SCHU S4 / Schu 4), this protein is DNA ligase.